The chain runs to 97 residues: Large ribosomal subunit protein uL23 (97 aa).

The protein belongs to the universal ribosomal protein uL23 family. In terms of assembly, part of the 50S ribosomal subunit. Contacts protein L29, and trigger factor when it is bound to the ribosome.

One of the early assembly proteins it binds 23S rRNA. One of the proteins that surrounds the polypeptide exit tunnel on the outside of the ribosome. Forms the main docking site for trigger factor binding to the ribosome. In Lactococcus lactis subsp. cremoris (strain SK11), this protein is Large ribosomal subunit protein uL23.